The following is a 91-amino-acid chain: Small ribosomal subunit protein uS19c (91 aa).

Belongs to the universal ribosomal protein uS19 family.

The protein localises to the plastid. The protein resides in the organellar chromatophore. Its function is as follows. Protein S19 forms a complex with S13 that binds strongly to the 16S ribosomal RNA. This is Small ribosomal subunit protein uS19c from Paulinella chromatophora.